The following is a 211-amino-acid chain: Large ribosomal subunit protein uL3 (211 aa).

Gln-150 is modified (N5-methylglutamine).

It belongs to the universal ribosomal protein uL3 family. Part of the 50S ribosomal subunit. Forms a cluster with proteins L14 and L19. Methylated by PrmB.

In terms of biological role, one of the primary rRNA binding proteins, it binds directly near the 3'-end of the 23S rRNA, where it nucleates assembly of the 50S subunit. In Stutzerimonas stutzeri (strain A1501) (Pseudomonas stutzeri), this protein is Large ribosomal subunit protein uL3.